Reading from the N-terminus, the 119-residue chain is Methylglyoxal synthase (119 aa).

Positions 1-119 (MKIALIAHDK…ESAKLIMADI (119 aa)) constitute an MGS-like domain. Residues histidine 8, lysine 12, 34–37 (TGTT), and 54–55 (SG) each bind substrate. Aspartate 60 serves as the catalytic Proton donor/acceptor. Histidine 87 serves as a coordination point for substrate.

Belongs to the methylglyoxal synthase family.

The enzyme catalyses dihydroxyacetone phosphate = methylglyoxal + phosphate. In terms of biological role, catalyzes the formation of methylglyoxal from dihydroxyacetone phosphate. The chain is Methylglyoxal synthase from Clostridium perfringens (strain 13 / Type A).